The primary structure comprises 647 residues: UvrABC system protein C (647 aa).

Positions 26 to 106 (SEPGCYLMRD…IKEHQPYFNI (81 aa)) constitute a GIY-YIG domain. Residues 216-251 (DQLKDLLHKQMLIQSKLQEFEKAAIIRDQIKGIEQL) enclose the UVR domain.

Belongs to the UvrC family. Interacts with UvrB in an incision complex.

Its subcellular location is the cytoplasm. The UvrABC repair system catalyzes the recognition and processing of DNA lesions. UvrC both incises the 5' and 3' sides of the lesion. The N-terminal half is responsible for the 3' incision and the C-terminal half is responsible for the 5' incision. The sequence is that of UvrABC system protein C from Prochlorococcus marinus (strain MIT 9211).